A 671-amino-acid polypeptide reads, in one-letter code: TBC1 domain family member 15 (671 aa).

Alanine 2 is subject to N-acetylalanine. 5 positions are modified to phosphoserine: serine 23, serine 32, serine 70, serine 205, and serine 257. The 211-residue stretch at 329–539 (GLSHSLRKQA…RLWEVMWTEL (211 aa)) folds into the Rab-GAP TBC domain. Phosphoserine occurs at positions 623 and 655. Residues 650 to 671 (EAKDDSPTQTLASPNACRLTPA) form a disordered region. Position 669 is a phosphothreonine (threonine 669).

In terms of assembly, interacts with non-phosphorylated form of RAB8A; phosphorylation of RAB8A at 'Thr-72' disrupts this interaction. Interacts with ARMC12. In terms of tissue distribution, ubiquitous, with highest expression in heart, liver and testis and lower expression in brain, spleen, lung, kidney and skeletal muscle.

The protein resides in the cytoplasm. Functionally, acts as a GTPase activating protein for RAB7A. Does not act on RAB4, RAB5 or RAB6. The polypeptide is TBC1 domain family member 15 (Tbc1d15) (Mus musculus (Mouse)).